Consider the following 295-residue polypeptide: Protease HtpX (295 aa).

2 helical membrane-spanning segments follow: residues 4–24 (ILLFVATNLAVVLVASITLSL) and 41–61 (SSLLVFCAVFGFAGSLVSLFI). His147 contacts Zn(2+). Residue Glu148 is part of the active site. Position 151 (His151) interacts with Zn(2+). Transmembrane regions (helical) follow at residues 158-178 (VTLALVQGVVNTFVMFFARII) and 199-219 (VATIVAELILGILASMIVMWF). Position 224 (Glu224) interacts with Zn(2+).

Belongs to the peptidase M48B family. Requires Zn(2+) as cofactor.

Its subcellular location is the cell inner membrane. This chain is Protease HtpX, found in Pseudomonas putida (strain GB-1).